We begin with the raw amino-acid sequence, 131 residues long: Probable ATP synthase subunit g 2, mitochondrial (131 aa).

This sequence belongs to the ATPase g subunit family. Subunit of the F-type ATPase which has 2 components, CF(1) - the catalytic core - and CF(0) - the membrane proton channel.

The protein resides in the mitochondrion membrane. Its function is as follows. Mitochondrial membrane ATP synthase (F(1)F(0) ATP synthase or Complex V) produces ATP from ADP in the presence of a proton gradient across the membrane which is generated by electron transport complexes of the respiratory chain. F-type ATPases consist of two structural domains, F(1) - containing the extramembraneous catalytic core, and F(0) - containing the membrane proton channel, linked together by a central stalk and a peripheral stalk. During catalysis, ATP synthesis in the catalytic domain of F(1) is coupled via a rotary mechanism of the central stalk subunits to proton translocation. Part of the complex F(0) domain. Minor subunit located with subunit a in the membrane. This chain is Probable ATP synthase subunit g 2, mitochondrial, found in Caenorhabditis elegans.